Here is a 319-residue protein sequence, read N- to C-terminus: Ribonuclease Z (319 aa).

Positions 62, 64, 66, 67, 139, 209, and 268 each coordinate Zn(2+). Residue D66 is the Proton acceptor of the active site.

The protein belongs to the RNase Z family. In terms of assembly, homodimer. It depends on Zn(2+) as a cofactor.

It catalyses the reaction Endonucleolytic cleavage of RNA, removing extra 3' nucleotides from tRNA precursor, generating 3' termini of tRNAs. A 3'-hydroxy group is left at the tRNA terminus and a 5'-phosphoryl group is left at the trailer molecule.. Its function is as follows. Zinc phosphodiesterase, which displays some tRNA 3'-processing endonuclease activity. Probably involved in tRNA maturation, by removing a 3'-trailer from precursor tRNA. In Pseudomonas putida (strain GB-1), this protein is Ribonuclease Z.